The following is a 341-amino-acid chain: N-acetyl-gamma-glutamyl-phosphate reductase (341 aa).

Cysteine 147 is an active-site residue.

It belongs to the NAGSA dehydrogenase family. Type 1 subfamily.

The protein resides in the cytoplasm. The enzyme catalyses N-acetyl-L-glutamate 5-semialdehyde + phosphate + NADP(+) = N-acetyl-L-glutamyl 5-phosphate + NADPH + H(+). The protein operates within amino-acid biosynthesis; L-arginine biosynthesis; N(2)-acetyl-L-ornithine from L-glutamate: step 3/4. Its function is as follows. Catalyzes the NADPH-dependent reduction of N-acetyl-5-glutamyl phosphate to yield N-acetyl-L-glutamate 5-semialdehyde. This chain is N-acetyl-gamma-glutamyl-phosphate reductase, found in Staphylococcus epidermidis (strain ATCC 35984 / DSM 28319 / BCRC 17069 / CCUG 31568 / BM 3577 / RP62A).